Consider the following 281-residue polypeptide: Cell growth regulator with EF hand domain protein 1 (281 aa).

The N-terminal stretch at 1–21 (MFQWLMQALMLPLLLLPLGRA) is a signal peptide. EF-hand domains follow at residues 71–106 (DREQVLLSLFALHDYDQNGQLDGLELLSMLTAALAP) and 115–150 (PVILVVDSVLETQDLDGDGLMTPAELINFPEVPKHT). Ca(2+) is bound by residues D84, D86, N88, Q90, E95, D128, D130, D132, and E139. The tract at residues 148–281 (KHTESLPPAL…HSIQLENDEI (134 aa)) is disordered. Positions 168–183 (LLANSPLQSETQQSLG) are enriched in polar residues. Residues 184–213 (TKEEIRGQVEAKRASLEPEQEAGHQTEGKV) are compositionally biased toward basic and acidic residues. Phosphoserine is present on residues S217 and S228. Residues 237-256 (EGAEEQVEIKDNEGEAKELL) are compositionally biased toward basic and acidic residues.

Probably digested extracellularly by an unknown serine protease generating extremely hydrophobic bioactive peptides.

It is found in the secreted. Its function is as follows. Mediates cell-cell adhesion in a calcium-dependent manner. Able to inhibit growth in several cell lines. The sequence is that of Cell growth regulator with EF hand domain protein 1 from Mus musculus (Mouse).